We begin with the raw amino-acid sequence, 116 residues long: Small ribosomal subunit protein bS16 (116 aa).

Residues 88–116 (RNNPKAAVPGKRMAELAKKKADRAAASAE) are disordered. Residues 99 to 110 (RMAELAKKKADR) are compositionally biased toward basic and acidic residues.

Belongs to the bacterial ribosomal protein bS16 family.

This is Small ribosomal subunit protein bS16 from Cereibacter sphaeroides (strain ATCC 17029 / ATH 2.4.9) (Rhodobacter sphaeroides).